Reading from the N-terminus, the 133-residue chain is MTVLLDANVLIALVVAEHVHHDAAADWLMASDTGFATCPMTQGSLVRFLVRSGQSAAAARDVVSAVQCTSRHEFWPDALSFAGVEVAGVVGHRQVTDAYLAQLARSHDGQLATLDSGLAHLHGDVAVLIPTTT.

One can recognise a PINc domain in the interval 3–122 (VLLDANVLIA…TLDSGLAHLH (120 aa)). Asp-6 and Asp-97 together coordinate Mg(2+).

Belongs to the PINc/VapC protein family. Mg(2+) serves as cofactor.

Toxic component of a type II toxin-antitoxin (TA) system. Its cognate antitoxin is VapB29. Has ribonuclease activity. The chain is Ribonuclease VapC29 from Mycobacterium tuberculosis (strain CDC 1551 / Oshkosh).